A 47-amino-acid chain; its full sequence is Large ribosomal subunit protein bL34 (47 aa).

The protein belongs to the bacterial ribosomal protein bL34 family.

In Corynebacterium jeikeium (strain K411), this protein is Large ribosomal subunit protein bL34.